A 93-amino-acid chain; its full sequence is Cell division protein FtsB (93 aa).

The Cytoplasmic portion of the chain corresponds to 1–3 (MRL). Residues 4 to 21 (FILVLTLLFGWLQYTLWF) traverse the membrane as a helical segment. Over 22–93 (GKNGVSDYYT…FYRIVGEENQ (72 aa)) the chain is Periplasmic. Residues 42–75 (VNTKLQARNSEMYAEIDDLKQGLDAIEERARHEL) adopt a coiled-coil conformation.

Belongs to the FtsB family. Part of a complex composed of FtsB, FtsL and FtsQ.

The protein localises to the cell inner membrane. In terms of biological role, essential cell division protein. May link together the upstream cell division proteins, which are predominantly cytoplasmic, with the downstream cell division proteins, which are predominantly periplasmic. The chain is Cell division protein FtsB from Vibrio vulnificus (strain YJ016).